The primary structure comprises 307 residues: Murein tetrapeptide carboxypeptidase (307 aa).

S115 (nucleophile) is an active-site residue. Active-site charge relay system residues include E217 and H285.

This sequence belongs to the peptidase S66 family. Homodimer.

It is found in the cytoplasm. The enzyme catalyses N-acetyl-D-glucosaminyl-N-acetylmuramoyl-L-alanyl-meso-2,6-diaminoheptanedioyl-D-alanine + H2O = N-acetyl-D-glucosaminyl-N-acetylmuramoyl-L-alanyl-meso-2,6-diaminoheptanedioate + D-alanine. The protein operates within cell wall biogenesis; peptidoglycan recycling. Releases the terminal D-alanine residue from the cytoplasmic disaccharide-tetrapeptide GlcNAc-MurNAc-L-Ala-gamma-D-Glu-meso-Dap-D-Ala, which is a murein turnover product. Probably also act on free tetrapetide. May be involved in murein recycling. This is Murein tetrapeptide carboxypeptidase from Pseudomonas aeruginosa (strain ATCC 15692 / DSM 22644 / CIP 104116 / JCM 14847 / LMG 12228 / 1C / PRS 101 / PAO1).